Reading from the N-terminus, the 421-residue chain is MRRVVITGTGMVSPLGCGTEVSWARLLTGDNAARKVTEFEVEDLPAKIACRIPFGDGSDGTFNADDWMEPKEQRKVDPFIVYAMAAADMALADAGWKPESDEDQISTGVLIGSGIGGLEGIVDAGYTLRDKGPRRISPFFIPGRLINLAAGQVSIRHKLRGPNHSVVTACSTGAHAIGDASRLIALGDADVMVAGGTESPICRISLAGFAACKALSTQHNDNPEKASRPYDADRDGFVMGEGAGIVVLEELEHARARGAKIYAEVIGYGLSGDAFHITAPSEDGEGAYRCMQMALKRAGVTAADIDYINAHGTSTMADTIELGAVERLVGDSASRISMSSTKSAIGHLLGAAGAVEAIFSALAIRDNIAPPTLNLDNPSVETKIDLVPHVARKREINVALSNSFGFGGTNASLILRRYTGH.

The region spanning 1–417 (MRRVVITGTG…GTNASLILRR (417 aa)) is the Ketosynthase family 3 (KS3) domain. Catalysis depends on for beta-ketoacyl synthase activity residues C170, H311, and H347.

The protein belongs to the thiolase-like superfamily. Beta-ketoacyl-ACP synthases family. In terms of assembly, homodimer.

It catalyses the reaction a fatty acyl-[ACP] + malonyl-[ACP] + H(+) = a 3-oxoacyl-[ACP] + holo-[ACP] + CO2. It carries out the reaction (9Z)-hexadecenoyl-[ACP] + malonyl-[ACP] + H(+) = 3-oxo-(11Z)-octadecenoyl-[ACP] + holo-[ACP] + CO2. The protein operates within lipid metabolism; fatty acid biosynthesis. Involved in the type II fatty acid elongation cycle. Catalyzes the elongation of a wide range of acyl-ACP by the addition of two carbons from malonyl-ACP to an acyl acceptor. Can efficiently catalyze the conversion of palmitoleoyl-ACP (cis-hexadec-9-enoyl-ACP) to cis-vaccenoyl-ACP (cis-octadec-11-enoyl-ACP), an essential step in the thermal regulation of fatty acid composition. The sequence is that of 3-oxoacyl-[acyl-carrier-protein] synthase 2 (fabF) from Rhizobium meliloti (strain 1021) (Ensifer meliloti).